Here is a 236-residue protein sequence, read N- to C-terminus: MRYNCRYSHIDKKIYSMIICLSFLLYSNVVQANSYNTTNRHNLESLYKHDSNLIEADSIKNSPDIVTSHMLKYSVKDKNLSVFFEKDWISQEFKDKEVDIYALSAQEVCECPGKRYEAFGGITLTNSEKKEIKVPVNVWDKSKQQPPMFITVNKPKVTAQEVDIKVRKLLIKKYDIYNNREQKYSKGTVTLDLNSGKDIVFDLYYFGNGDFNSMLKIYSNNERIDSTQFHVDVSIS.

Residues 1 to 32 (MRYNCRYSHIDKKIYSMIICLSFLLYSNVVQA) form the signal peptide.

Belongs to the staphylococcal/streptococcal toxin family.

Its subcellular location is the secreted. Its function is as follows. Mitogenic for human peripheral blood lymphocytes. The protein is Exotoxin type H (speH) of Streptococcus pyogenes serotype M1.